Here is a 200-residue protein sequence, read N- to C-terminus: Probable E3 ubiquitin-protein ligase ATL45 (200 aa).

A helical membrane pass occupies residues 26-46 (MVVILSALLCALVCVAGLAAV). Residues 113-155 (CAICITEFSEGEEIRILPLCSHAFHVACIDKWLTSRSSCPSCR) form an RING-type; atypical zinc finger.

This sequence belongs to the RING-type zinc finger family. ATL subfamily. As to quaternary structure, interacts with BIK1.

It is found in the membrane. The catalysed reaction is S-ubiquitinyl-[E2 ubiquitin-conjugating enzyme]-L-cysteine + [acceptor protein]-L-lysine = [E2 ubiquitin-conjugating enzyme]-L-cysteine + N(6)-ubiquitinyl-[acceptor protein]-L-lysine.. The protein operates within protein modification; protein ubiquitination. Functionally, E3 ubiquitin-protein ligase that possess E3 ubiquitin ligase activity in vitro and mediates protein monoubiquitination. Triggers the monoubiquitination of phosphorylated BIK1 in response to pathogen-associated molecular pattern (PAMP) detection. May be involved in the early steps of the plant defense signaling pathway. This chain is Probable E3 ubiquitin-protein ligase ATL45, found in Arabidopsis thaliana (Mouse-ear cress).